An 800-amino-acid chain; its full sequence is Isoamylase 2, chloroplastic (800 aa).

A compositionally biased stretch (pro residues) spans 1-10 (MASLPAPPTP). The segment at 1–22 (MASLPAPPTPLGSCPRGRGGGR) is disordered. The N-terminal 34 residues, 1 to 34 (MASLPAPPTPLGSCPRGRGGGRVVARPRRAGLAC), are a transit peptide targeting the chloroplast.

Belongs to the glycosyl hydrolase 13 family. Forms a hetero-hexamer composed of five ISA1 and one ISA2. Highly expressed in developing endosperm and leaves.

The protein resides in the plastid. Its subcellular location is the chloroplast. The enzyme catalyses Hydrolysis of (1-&gt;6)-alpha-D-glucosidic branch linkages in glycogen, amylopectin and their beta-limit dextrins.. Starch-debranching enzyme involved in amylopectin biosynthesis in endosperm. Functions by removing excess branches or improper branches that interfere with the formation of double helices of the cluster chains of amylopectin and crystallization of starch. Works together with ISA1 as heterooligomer. The heterooligomer ISA1 and ISA2 possesses higher affinity than the ISA1 homooligomer for various branched polyglucans in vitro, but no marked differences exist in chain preferences for debranching of amylopectin and phytoglycogen between these forms. The polypeptide is Isoamylase 2, chloroplastic (Oryza sativa subsp. japonica (Rice)).